We begin with the raw amino-acid sequence, 389 residues long: Large envelope protein (389 aa).

Methionine 1 bears the N-acetylmethionine mark. Glycine 2 is lipidated: N-myristoyl glycine; by host. Residues 2–108 (GTNLSVPNPL…PPLRDTHPQA (107 aa)) are pre-S1. Residues 2-163 (GTNLSVPNPL…LSKTGDPVPN (162 aa)) form a pre-S region. Topologically, residues 2–170 (GTNLSVPNPL…VPNMENIASG (169 aa)) are virion surface; in external conformation. Residues 2–242 (GTNLSVPNPL…PGYRWMCLRR (241 aa)) lie on the Intravirion; in internal conformation side of the membrane. The tract at residues 73–107 (ILTSVPAAPPPASTNRQSGRQPTPLSPPLRDTHPQ) is disordered. The segment covering 85 to 95 (STNRQSGRQPT) has biased composition (polar residues). Residues 109–163 (MQWNSTTFHQTLQDPRVRALYFPAGGSSSGTVSPAQNTVSAISSILSKTGDPVPN) form a pre-S2 region. The helical transmembrane segment at 171-191 (LLGPLLVLQAGFFLLTKILTI) threads the bilayer. Topologically, residues 192–242 (PQSLDSWWTSLNFLGGTPVCLGQNSQSQISSHSPTCCPPICPGYRWMCLRR) are intravirion; in external conformation. The chain crosses the membrane as a helical span at residues 243–263 (FIIFLCILLLCLIFLLVLLDY). Residues 264-337 (QGMLPVCPLI…WASVRFSWLS (74 aa)) lie on the Virion surface side of the membrane. Asparagine 309 carries an N-linked (GlcNAc...) asparagine; by host glycan. Residues 338 to 358 (LLVPFVQWFVGLSPTVWLSVI) traverse the membrane as a helical segment. At 359–364 (WMMWYW) the chain is on the intravirion side. Residues 365 to 387 (GPSLYNILSPFMPLLPIFFCLWV) form a helical membrane-spanning segment. Over 388–389 (YI) the chain is Virion surface.

The protein belongs to the orthohepadnavirus major surface antigen family. Interacts (via its myristoylated pre-S1 region) with the host SLC10A1/NTCP; this interaction is essential for viral entry. As to quaternary structure, in its internal form (Li-HBsAg), interacts with the capsid protein and with the isoform S. Interacts with host chaperone CANX. In terms of assembly, associates with host chaperone CANX through its pre-S2 N glycan; this association may be essential for isoform M proper secretion. Interacts with isoform L. Interacts with the antigens of satellite virus HDV (HDVAgs); this interaction is required for encapsidation of HDV genomic RNA. Isoform M is N-terminally acetylated by host at a ratio of 90%, and N-glycosylated by host at the pre-S2 region. In terms of processing, myristoylated; this modification is essential for its interaction with the host protein SLC10A1/NTCP.

The protein resides in the virion membrane. Functionally, the large envelope protein exists in two topological conformations, one which is termed 'external' or Le-HBsAg and the other 'internal' or Li-HBsAg. In its external conformation the protein attaches the virus to cell receptors and thereby initiating infection. This interaction determines the species specificity and liver tropism. This attachment induces virion internalization predominantly through caveolin-mediated endocytosis. The large envelope protein also assures fusion between virion membrane and endosomal membrane. In its internal conformation the protein plays a role in virion morphogenesis and mediates the contact with the nucleocapsid like a matrix protein. In terms of biological role, the middle envelope protein plays an important role in the budding of the virion. It is involved in the induction of budding in a nucleocapsid independent way. In this process the majority of envelope proteins bud to form subviral lipoprotein particles of 22 nm of diameter that do not contain a nucleocapsid. This Hepatitis B virus genotype B1 subtype adw (isolate Japan/pJDW233/1988) (HBV-B) protein is Large envelope protein.